Here is a 388-residue protein sequence, read N- to C-terminus: Ribonuclease D (388 aa).

The 168-residue stretch at 24–191 (QYVSDEASLN…LYPQLADKLK (168 aa)) folds into the 3'-5' exonuclease domain. The HRDC domain maps to 230–310 (TEHQLAYLKV…QTADLSNPPE (81 aa)).

It belongs to the RNase D family. A divalent metal cation is required as a cofactor.

The protein localises to the cytoplasm. The enzyme catalyses Exonucleolytic cleavage that removes extra residues from the 3'-terminus of tRNA to produce 5'-mononucleotides.. Exonuclease involved in the 3' processing of various precursor tRNAs. Initiates hydrolysis at the 3'-terminus of an RNA molecule and releases 5'-mononucleotides. In Shewanella sp. (strain ANA-3), this protein is Ribonuclease D.